Here is a 261-residue protein sequence, read N- to C-terminus: NAD(P)H-quinone oxidoreductase subunit K, chloroplastic (261 aa).

Positions 43, 44, 108, and 139 each coordinate [4Fe-4S] cluster.

It belongs to the complex I 20 kDa subunit family. In terms of assembly, NDH is composed of at least 16 different subunits, 5 of which are encoded in the nucleus. It depends on [4Fe-4S] cluster as a cofactor.

The protein localises to the plastid. Its subcellular location is the chloroplast thylakoid membrane. The catalysed reaction is a plastoquinone + NADH + (n+1) H(+)(in) = a plastoquinol + NAD(+) + n H(+)(out). It catalyses the reaction a plastoquinone + NADPH + (n+1) H(+)(in) = a plastoquinol + NADP(+) + n H(+)(out). Functionally, NDH shuttles electrons from NAD(P)H:plastoquinone, via FMN and iron-sulfur (Fe-S) centers, to quinones in the photosynthetic chain and possibly in a chloroplast respiratory chain. The immediate electron acceptor for the enzyme in this species is believed to be plastoquinone. Couples the redox reaction to proton translocation, and thus conserves the redox energy in a proton gradient. This is NAD(P)H-quinone oxidoreductase subunit K, chloroplastic from Cycas taitungensis (Prince sago).